A 335-amino-acid polypeptide reads, in one-letter code: Anthranilate phosphoribosyltransferase (335 aa).

5-phospho-alpha-D-ribose 1-diphosphate is bound by residues Gly82, 85–86 (GD), Thr90, 92–95 (NIST), 110–118 (KHGGRSVSS), and Ser122. Residue Gly82 participates in anthranilate binding. Residue Ser94 coordinates Mg(2+). An anthranilate-binding site is contributed by Arg168. Mg(2+)-binding residues include Asp226 and Glu227.

Belongs to the anthranilate phosphoribosyltransferase family. Homodimer. Requires Mg(2+) as cofactor.

The catalysed reaction is N-(5-phospho-beta-D-ribosyl)anthranilate + diphosphate = 5-phospho-alpha-D-ribose 1-diphosphate + anthranilate. Its pathway is amino-acid biosynthesis; L-tryptophan biosynthesis; L-tryptophan from chorismate: step 2/5. Its function is as follows. Catalyzes the transfer of the phosphoribosyl group of 5-phosphorylribose-1-pyrophosphate (PRPP) to anthranilate to yield N-(5'-phosphoribosyl)-anthranilate (PRA). In Francisella philomiragia subsp. philomiragia (strain ATCC 25017 / CCUG 19701 / FSC 153 / O#319-036), this protein is Anthranilate phosphoribosyltransferase.